Consider the following 420-residue polypeptide: D-tagatose-1,6-bisphosphate aldolase subunit GatZ (420 aa).

The protein belongs to the GatZ/KbaZ family. GatZ subfamily. Forms a complex with GatY.

The protein operates within carbohydrate metabolism; D-tagatose 6-phosphate degradation; D-glyceraldehyde 3-phosphate and glycerone phosphate from D-tagatose 6-phosphate: step 2/2. Its function is as follows. Component of the tagatose-1,6-bisphosphate aldolase GatYZ that is required for full activity and stability of the Y subunit. Could have a chaperone-like function for the proper and stable folding of GatY. When expressed alone, GatZ does not show any aldolase activity. Is involved in the catabolism of galactitol. This Escherichia coli O6:K15:H31 (strain 536 / UPEC) protein is D-tagatose-1,6-bisphosphate aldolase subunit GatZ.